The chain runs to 213 residues: Neuromodulin (213 aa).

The interval 1 to 213 is disordered; sequence MLCCIRRTKP…AEEAGKDQNV (213 aa). Residues C3 and C4 are each lipidated (S-palmitoyl cysteine). Residues 9-33 show a composition bias toward basic and acidic residues; it reads KPVEKNEEADQEIKQDGTKPEENAH. An IQ domain is found at 32–61; it reads AHKAATKIQASFRGHITRKKMKDEDKDGEN. The segment covering 57 to 73 has biased composition (acidic residues); the sequence is KDGENDTAPDESAETEE. Residues 74-86 show a composition bias toward basic and acidic residues; it reads KEERVSPSEEKPV. The segment covering 102-122 has biased composition (low complexity); the sequence is PNSPAAEAPPTAATDSAPSDT. The segment covering 157-169 has biased composition (acidic residues); the sequence is EKEEEEEEEEEEE. Residues 191–213 show a composition bias toward basic and acidic residues; it reads QTDKKEALDDSKPAEEAGKDQNV.

It belongs to the neuromodulin family. Binds calmodulin with a greater affinity in the absence of Ca(2+) than in its presence. Post-translationally, palmitoylated. Palmitoylation is essential for plasma membrane association.

It localises to the cell membrane. The protein resides in the cell projection. Its subcellular location is the growth cone membrane. The protein localises to the synapse. It is found in the filopodium membrane. Functionally, this protein is associated with nerve growth. It is a major component of the motile 'growth cones' that form the tips of elongating axons. Plays a role in axonal and dendritic filopodia induction. In Carassius auratus (Goldfish), this protein is Neuromodulin (gap43).